We begin with the raw amino-acid sequence, 1210 residues long: Disease resistance-like protein DSC2 (1210 aa).

The 165-residue stretch at 59-223 (WTHQVFPSFR…KVAKDVSDVL (165 aa)) folds into the TIR domain. The active site involves E134. The region spanning 241–511 (ITRINSLLCL…CLFNGCQVNH (271 aa)) is the NB-ARC domain. LRR repeat units follow at residues 662 to 685 (AKFLVELIMRANKFEKLWEGIQPL), 686 to 709 (KNLKRMELGDARNLKEIPDLSNAT), 711 to 732 (LESLLLSFCTSLLEIPSSIRGT), 756 to 780 (ATSLEELNLSACSNLVELPCALPGD), 783 to 804 (MRSLSKLLLNGSSRLKTFPEIS), 805 to 828 (TNIQELNLSGTAIEEVPSSIRLWS), 830 to 848 (LDKLDMSRCKNLKMFPPVP), 849 to 873 (DGISVLNLSETEIEDIPPWVENLSQ), and 940 to 970 (LPELVYTSPVSLHFISNEFKTIPDCIKNLSQ).

It belongs to the disease resistance NB-LRR family. Interacts with DSC1.

The enzyme catalyses NAD(+) + H2O = ADP-D-ribose + nicotinamide + H(+). TIR-NB-LRR receptor-like protein involved in plant defense. Acts as a trigger of hypersensitive response (HR). Functions as a guard of CAMTA3, a negative regulator of immunity, during pathogen infection. In Arabidopsis thaliana (Mouse-ear cress), this protein is Disease resistance-like protein DSC2.